We begin with the raw amino-acid sequence, 126 residues long: Holo-[acyl-carrier-protein] synthase (126 aa).

Mg(2+) is bound by residues aspartate 9 and glutamate 58.

This sequence belongs to the P-Pant transferase superfamily. AcpS family. The cofactor is Mg(2+).

The protein resides in the cytoplasm. The catalysed reaction is apo-[ACP] + CoA = holo-[ACP] + adenosine 3',5'-bisphosphate + H(+). Functionally, transfers the 4'-phosphopantetheine moiety from coenzyme A to a Ser of acyl-carrier-protein. This is Holo-[acyl-carrier-protein] synthase from Salmonella paratyphi B (strain ATCC BAA-1250 / SPB7).